An 831-amino-acid chain; its full sequence is MQGAVIVLVLFGITSGGEALHLLHLPATSNVAENAPPATLVHKFSVNLSVSLSPVIPGFPLVVNPRPFTEAFRVNRLSATNFEVVTTGKEQLDFERGPKAFDLQIYVKDDVGVTDVQVLTVQVTDVNEPPQFQGILAQGLNLYVIERTNPGFIYQVEAFDPEDTSRSIPLGYFLISPSKNFRMSANGTLFSTTELDFEAGHKSFNLLVGVRDSGNLEASTALQVTIVNINDETPRFTSPRRVYSVPEEVPLGTMVANITAMDPDDEGFPGRLLYSITTTSSYFMVDQLTGTIQVARRLDRDAGELRQNPIISLEVRVRDRPSGGQENRMQITFIVEDINDNPATCRKLTFSIMLPERTANGTLLLDLNKFCFDDDSEAPNNKFNFTTPSGAGSSRRFSQHPAGSGRIVLTGDLDYENPSNLAVGNVYNVMIQVQDAAPPYYKKSIYISILTRPENEFPLIFERPSYVFDVPERRPARTQIGQVRATDADFPRTPVVYSVSRGGSSLQYPNIFWINPKTGELQLITQADHETTSVYILTVEATNGEDRSSVTVTVNILGENDEKPVCTPNFYFMAIPVDLKVGTNIQNFKLTCTDLDSSPSSFRYSIGSGNINNHFTFSPNAGSNITRLLLASRFDYSSLDTVWDYQLLVHITDDNLLSGSTKAKALVETGTVTLSVKVIPHPTTTITTPRPRITYQIRRENVYSTSAWYVPFIVTLGSILLLGLLGSLMVLLSKAVYRHCSSTTRRDRKPLTKKRDTKRMNREAMVESIQMNSVFDGEAVDPVTGEIYEFNSKTGARRWKGPLTQLPNWPEPSTQHRGTAGEAPVPKHTGR.

Positions 1–19 (MQGAVIVLVLFGITSGGEA) are cleaved as a signal peptide. Over 20–711 (LHLLHLPATS…VYSTSAWYVP (692 aa)) the chain is Extracellular. 6 consecutive Cadherin domains span residues 24–132 (HLPA…PPQF), 136–236 (LAQG…TPRF), 237–344 (TSPR…NPAT), 346–466 (RKLT…RPSY), 462–570 (ERPS…TPNF), and 567–693 (TPNF…RPRI). N-linked (GlcNAc...) asparagine glycosylation is found at Asn47, Asn186, and Asn257. Residues 712-732 (FIVTLGSILLLGLLGSLMVLL) traverse the membrane as a helical segment. Topologically, residues 733–831 (SKAVYRHCSS…EAPVPKHTGR (99 aa)) are cytoplasmic. Disordered stretches follow at residues 743–763 (TTRR…MNRE) and 798–831 (RWKG…HTGR). Residues 749-763 (KPLTKKRDTKRMNRE) show a composition bias toward basic and acidic residues. The segment covering 805 to 817 (QLPNWPEPSTQHR) has biased composition (polar residues).

Its subcellular location is the cell membrane. Cadherins are calcium-dependent cell adhesion proteins. They preferentially interact with themselves in a homophilic manner in connecting cells; cadherins may thus contribute to the sorting of heterogeneous cell types. This Mus musculus (Mouse) protein is Cadherin-related family member 3 (Cdhr3).